A 384-amino-acid chain; its full sequence is Deoxyguanosinetriphosphate triphosphohydrolase-like protein (384 aa).

Residues 12 to 39 (ELASYASDPSKTRGRRHSEPPPENRTEF) are disordered. Positions 28 to 39 (HSEPPPENRTEF) are enriched in basic and acidic residues. Residues 73-208 (RLTHSLEVAQ…ANLADEVAYN (136 aa)) form the HD domain.

This sequence belongs to the dGTPase family. Type 2 subfamily.

The protein is Deoxyguanosinetriphosphate triphosphohydrolase-like protein of Bordetella parapertussis (strain 12822 / ATCC BAA-587 / NCTC 13253).